We begin with the raw amino-acid sequence, 588 residues long: Progranulin (588 aa).

Residues 1 to 17 (MWILVSWLALVARLVAG) form the signal peptide. Residue asparagine 38 is glycosylated (N-linked (GlcNAc...) asparagine). 12 cysteine pairs are disulfide-bonded: cysteine 125/cysteine 138, cysteine 132/cysteine 148, cysteine 281/cysteine 293, cysteine 287/cysteine 303, cysteine 294/cysteine 311, cysteine 304/cysteine 318, cysteine 312/cysteine 325, cysteine 319/cysteine 332, cysteine 363/cysteine 375, cysteine 369/cysteine 385, cysteine 394/cysteine 407, and cysteine 401/cysteine 413. The N-linked (GlcNAc...) asparagine glycan is linked to asparagine 372. N-linked (GlcNAc...) asparagine glycosylation is present at asparagine 525.

The protein belongs to the granulin family. In terms of assembly, progranulin is secreted as a homodimer. Interacts with SLPI; interaction protects progranulin from proteolysis. Interacts (via region corresponding to granulin-7 peptide) with CTSD; stabilizes CTSD and increases its proteolytic activity. Interacts (via region corresponding to granulin-7 peptide) with SORT1; this interaction mediates endocytosis and lysosome delivery of progranulin; interaction occurs at the neuronal cell surface in a stressed nervous system. Interacts with PSAP; facilitates lysosomal delivery of progranulin from the extracellular space and the biosynthetic pathway. Forms a complex with PSAP and M6PR; PSAP bridges the binding between progranulin and M6PR. Forms a complex with PSAP and SORT1; progranulin bridges the interaction between PSAP and SORT1; facilitates lysosomal targeting of PSAP via SORT1; interaction enhances PSAP uptake in primary cortical neurons. Interacts (via regions corresponding to granulin-2 and granulin-7 peptides) with GBA1; this interaction prevents aggregation of GBA1-SCARB2 complex via interaction with HSPA1A upon stress. Interacts (via region corresponding to granulin-7 peptide) with HSPA1A; mediates recruitment of HSPA1A to GBA1 and prevents GBA1 aggregation in response to stress. Post-translationally, cleaved by ELANE; proteolysis is blocked by SLPI and is concentration- and time-dependent and induces CXCL8/IL-8 production; granulin-3 and granulin-4 are resistant to ELANE. Cleaved by CTSL in lysosome thus regulating the maturation and turnover of progranulin within the lysosome. As to expression, ubiquitous; most abundant in the spleen and several tissues of endocrine significance.

Its subcellular location is the secreted. The protein resides in the lysosome. In terms of biological role, secreted protein that acts as a key regulator of lysosomal function and as a growth factor involved in inflammation, wound healing and cell proliferation. Regulates protein trafficking to lysosomes, and also the activity of lysosomal enzymes. Also facilitates the acidification of lysosomes, causing degradation of mature CTSD by CTSB. In addition, functions as a wound-related growth factor that acts directly on dermal fibroblasts and endothelial cells to promote division, migration and the formation of capillary-like tubule structures. Also promotes epithelial cell proliferation by blocking TNF-mediated neutrophil activation preventing release of oxidants and proteases. Moreover, modulates inflammation in neurons by preserving neurons survival, axonal outgrowth and neuronal integrity. Functionally, inhibits epithelial cell proliferation and induces epithelial cells to secrete IL-8. Its function is as follows. Stabilizes CTSD through interaction with CTSD leading to maintain its aspartic-type peptidase activity. The sequence is that of Progranulin (Grn) from Rattus norvegicus (Rat).